Here is a 719-residue protein sequence, read N- to C-terminus: Alpha-galactosidase 2 (719 aa).

Residue Asp-472 is the Nucleophile of the active site. Asp-542 functions as the Proton donor in the catalytic mechanism.

The protein belongs to the glycosyl hydrolase 36 family.

It carries out the reaction Hydrolysis of terminal, non-reducing alpha-D-galactose residues in alpha-D-galactosides, including galactose oligosaccharides, galactomannans and galactolipids.. Its function is as follows. Alpha-galactosidase associated with the sucrase operon. In Pediococcus pentosaceus, this protein is Alpha-galactosidase 2 (agaS).